Consider the following 473-residue polypeptide: RuvB-like helicase 2 (473 aa).

Glycine 76–threonine 83 contacts ATP.

It belongs to the RuvB family. As to quaternary structure, may form heterododecamers with RVB1. Component of the SWR1 chromatin remodeling complex, the INO80 chromatin remodeling complex, and of the R2TP complex.

It is found in the nucleus. The catalysed reaction is ATP + H2O = ADP + phosphate + H(+). Its function is as follows. DNA helicase which participates in several chromatin remodeling complexes, including the SWR1 and the INO80 complexes. The SWR1 complex mediates the ATP-dependent exchange of histone H2A for the H2A variant HZT1 leading to transcriptional regulation of selected genes by chromatin remodeling. The INO80 complex remodels chromatin by shifting nucleosomes and is involved in DNA repair. Also involved in pre-rRNA processing. This Gibberella zeae (strain ATCC MYA-4620 / CBS 123657 / FGSC 9075 / NRRL 31084 / PH-1) (Wheat head blight fungus) protein is RuvB-like helicase 2 (RVB2).